A 264-amino-acid chain; its full sequence is ATP synthase subunit a (264 aa).

6 helical membrane passes run 29 to 49 (TWHIDSLFFSVGLGVLFLWIF), 87 to 107 (NALIAPLALTIFVWVFMMNFM), 134 to 154 (DVNITFSLAIGVFVLIIYYSI), 177 to 197 (IPVNLLLETVTLIAKPISLAL), 208 to 228 (LIFILIALMYGTNLLLSSLGV), and 235 to 255 (LIFHILVITLQAFIFMMLTIV).

Belongs to the ATPase A chain family. F-type ATPases have 2 components, CF(1) - the catalytic core - and CF(0) - the membrane proton channel. CF(1) has five subunits: alpha(3), beta(3), gamma(1), delta(1), epsilon(1). CF(0) has three main subunits: a(1), b(2) and c(9-12). The alpha and beta chains form an alternating ring which encloses part of the gamma chain. CF(1) is attached to CF(0) by a central stalk formed by the gamma and epsilon chains, while a peripheral stalk is formed by the delta and b chains.

Its subcellular location is the cell inner membrane. In terms of biological role, key component of the proton channel; it plays a direct role in the translocation of protons across the membrane. The protein is ATP synthase subunit a of Shewanella sp. (strain MR-4).